Consider the following 281-residue polypeptide: Undecaprenyl-diphosphatase (281 aa).

A run of 7 helical transmembrane segments spans residues 45–65 (AFTNMFNVVIQLGAILAVVVI), 86–106 (WQLWAKVILSALPAAVIGLIF), 114–134 (FQNFFSVALMLILYGIAFIYV), 148–168 (LVSLPYKTAFFIGLFQVLSLI), 196–216 (FFLGIPIMFGASLVKVLKFIV), 224–244 (SQLFILLVAMLVAFAVSLYVI), and 256–276 (FTFFGKYRIGLGILLLFYGLM).

The protein belongs to the UppP family.

The protein localises to the cell membrane. The enzyme catalyses di-trans,octa-cis-undecaprenyl diphosphate + H2O = di-trans,octa-cis-undecaprenyl phosphate + phosphate + H(+). Its function is as follows. Catalyzes the dephosphorylation of undecaprenyl diphosphate (UPP). Confers resistance to bacitracin. The sequence is that of Undecaprenyl-diphosphatase from Streptococcus mutans serotype c (strain ATCC 700610 / UA159).